The chain runs to 177 residues: tRNA (cytidine(56)-2'-O)-methyltransferase (177 aa).

Residues L84 and G109–V113 each bind S-adenosyl-L-methionine.

It belongs to the aTrm56 family. In terms of assembly, homodimer.

It localises to the cytoplasm. It carries out the reaction cytidine(56) in tRNA + S-adenosyl-L-methionine = 2'-O-methylcytidine(56) in tRNA + S-adenosyl-L-homocysteine + H(+). In terms of biological role, specifically catalyzes the AdoMet-dependent 2'-O-ribose methylation of cytidine at position 56 in tRNAs. This Methanosarcina mazei (strain ATCC BAA-159 / DSM 3647 / Goe1 / Go1 / JCM 11833 / OCM 88) (Methanosarcina frisia) protein is tRNA (cytidine(56)-2'-O)-methyltransferase.